Reading from the N-terminus, the 142-residue chain is MTIIIGSDVDGKRLKELIKDYLEDNDYDVLDVTEGKDLDFVDSTVSVAKEVQKSDDNLGIAIDAYGAGSFIVATKIKGMIAAEVSDERSAYMTRSHNNARMITMGAEIVGDTLAKNVAKEFVNGHYDGGRHQIRVDMLNKMC.

This sequence belongs to the LacAB/RpiB family. In terms of assembly, heteromultimeric protein consisting of LacA and LacB.

The enzyme catalyses aldehydo-D-galactose 6-phosphate = keto-D-tagatose 6-phosphate. Its pathway is carbohydrate metabolism; D-galactose 6-phosphate degradation; D-tagatose 6-phosphate from D-galactose 6-phosphate: step 1/1. In Staphylococcus epidermidis (strain ATCC 35984 / DSM 28319 / BCRC 17069 / CCUG 31568 / BM 3577 / RP62A), this protein is Galactose-6-phosphate isomerase subunit LacA.